A 161-amino-acid polypeptide reads, in one-letter code: MPSFDIVSKVDMQEVDNAINQTVKEIAQRYDFKGSKCEVTLEKENIKVLADDDFKLKAVIDILQSKFIKRNISPKSLQYGKAEQASGSMVRQIITLQVGISKEKAKEIGQVIKETKLKVQSQIQDDQLRVTGKNIDDLQEVIRVLKGKDLDIDMQFVNFRS.

It belongs to the YajQ family.

Functionally, nucleotide-binding protein. The polypeptide is Nucleotide-binding protein Gbem_0619 (Citrifermentans bemidjiense (strain ATCC BAA-1014 / DSM 16622 / JCM 12645 / Bem) (Geobacter bemidjiensis)).